The chain runs to 364 residues: MREETREQPAPLRSGLTTGSCATATSLAAAKLLLTGQRDDAVDITLPKGKVVQMRLEFCRLIGECAEAGTLKDAGDDPDVTHGALLYSQVRLLAEPGIGFVAGSGVGTVTRPGLVLAVGEPAINPVPRRMISEHLQRLADACGYLGGFEVTVNVQGGEQLALKTMNPRLGILGGLSILGTSGIVRPFSCAAYIASIHQGIDVAHTNGYTHIAACTGNASEDTMRRVYGLPEIALIEMGDFVGAVLKHLRKVPVPRLTLCGGFGKISKLAAGHMDLHSRHSSIDLPQLAGWAADIGADEALQAAISGANTSQQALALAHAAGIALGDAVCAHALAFARSVVPAQVHVEVFAIDRQGGIVGQAGVQ.

This sequence belongs to the CbiD family.

The catalysed reaction is Co-precorrin-5B + S-adenosyl-L-methionine = Co-precorrin-6A + S-adenosyl-L-homocysteine. Its pathway is cofactor biosynthesis; adenosylcobalamin biosynthesis; cob(II)yrinate a,c-diamide from sirohydrochlorin (anaerobic route): step 6/10. In terms of biological role, catalyzes the methylation of C-1 in cobalt-precorrin-5B to form cobalt-precorrin-6A. The chain is Cobalt-precorrin-5B C(1)-methyltransferase from Pseudomonas putida (strain ATCC 700007 / DSM 6899 / JCM 31910 / BCRC 17059 / LMG 24140 / F1).